A 330-amino-acid polypeptide reads, in one-letter code: Aspartate--ammonia ligase (330 aa).

This sequence belongs to the class-II aminoacyl-tRNA synthetase family. AsnA subfamily.

The protein localises to the cytoplasm. The enzyme catalyses L-aspartate + NH4(+) + ATP = L-asparagine + AMP + diphosphate + H(+). It functions in the pathway amino-acid biosynthesis; L-asparagine biosynthesis; L-asparagine from L-aspartate (ammonia route): step 1/1. This is Aspartate--ammonia ligase from Escherichia coli (strain SMS-3-5 / SECEC).